The following is a 387-amino-acid chain: Tetratricopeptide repeat protein 4 (387 aa).

At methionine 1 the chain carries N-acetylmethionine. Residues serine 47 and serine 51 each carry the phosphoserine modification. TPR repeat units lie at residues 79–112 (AKTYKDEGNDYFKEKDYKKAVISYTEGLKKKCAD), 117–150 (AVLYTNRAAAQYYLGNFRSALNDVTAARKLKPCH), and 151–184 (LKAIIRGALCHLELKHFAEAVNWCDEGLQIDAKE). A Phosphoserine modification is found at serine 243.

This sequence belongs to the TTC4 family. In terms of assembly, interacts (via TPR repeats) with HSP90AB1. Interacts with HSPA8 and CDC6. Interacts with TBK1. Interacts with MSL1. As to expression, highly expressed in proliferating tissue and tumor cell lines but not in normal cell lines.

The protein localises to the nucleus. It is found in the nucleoplasm. Its subcellular location is the cytoplasm. May act as a co-chaperone for HSP90AB1. Promotes Sendai virus (SeV)-induced host cell innate immune responses. The chain is Tetratricopeptide repeat protein 4 (TTC4) from Homo sapiens (Human).